Consider the following 493-residue polypeptide: Glutamyl-tRNA(Gln) amidotransferase subunit A (493 aa).

Catalysis depends on charge relay system residues lysine 78 and serine 158. Catalysis depends on serine 182, which acts as the Acyl-ester intermediate.

It belongs to the amidase family. GatA subfamily. Heterotrimer of A, B and C subunits.

The enzyme catalyses L-glutamyl-tRNA(Gln) + L-glutamine + ATP + H2O = L-glutaminyl-tRNA(Gln) + L-glutamate + ADP + phosphate + H(+). Functionally, allows the formation of correctly charged Gln-tRNA(Gln) through the transamidation of misacylated Glu-tRNA(Gln) in organisms which lack glutaminyl-tRNA synthetase. The reaction takes place in the presence of glutamine and ATP through an activated gamma-phospho-Glu-tRNA(Gln). This chain is Glutamyl-tRNA(Gln) amidotransferase subunit A, found in Azorhizobium caulinodans (strain ATCC 43989 / DSM 5975 / JCM 20966 / LMG 6465 / NBRC 14845 / NCIMB 13405 / ORS 571).